We begin with the raw amino-acid sequence, 67 residues long: UPF0434 protein Bphy_0537 (67 aa).

Belongs to the UPF0434 family.

The polypeptide is UPF0434 protein Bphy_0537 (Paraburkholderia phymatum (strain DSM 17167 / CIP 108236 / LMG 21445 / STM815) (Burkholderia phymatum)).